We begin with the raw amino-acid sequence, 649 residues long: Acetyl-coenzyme A synthetase (649 aa).

CoA is bound by residues 189–192 (RGGK), threonine 311, and asparagine 335. ATP contacts are provided by residues 387–389 (GEP), 411–416 (DTWWQT), aspartate 500, and arginine 515. Serine 523 serves as a coordination point for CoA. Position 526 (arginine 526) interacts with ATP. Residues valine 537, histidine 539, and valine 542 each coordinate Mg(2+). Position 584 (arginine 584) interacts with CoA. Position 609 is an N6-acetyllysine (lysine 609).

It belongs to the ATP-dependent AMP-binding enzyme family. Mg(2+) is required as a cofactor. In terms of processing, acetylated. Deacetylation by the SIR2-homolog deacetylase activates the enzyme.

It catalyses the reaction acetate + ATP + CoA = acetyl-CoA + AMP + diphosphate. Functionally, catalyzes the conversion of acetate into acetyl-CoA (AcCoA), an essential intermediate at the junction of anabolic and catabolic pathways. AcsA undergoes a two-step reaction. In the first half reaction, AcsA combines acetate with ATP to form acetyl-adenylate (AcAMP) intermediate. In the second half reaction, it can then transfer the acetyl group from AcAMP to the sulfhydryl group of CoA, forming the product AcCoA. This is Acetyl-coenzyme A synthetase from Sinorhizobium fredii (strain NBRC 101917 / NGR234).